Here is a 146-residue protein sequence, read N- to C-terminus: Leghemoglobin alpha (146 aa).

The Globin domain maps to 3 to 146 (AFTEKQEALV…LAAAIKKAYA (144 aa)). Residues tyrosine 26 and tyrosine 31 each carry the nitrated tyrosine modification. Serine 46 contacts heme b. Position 46 is a phosphoserine (serine 46). Histidine 62 is an O2 binding site. Heme b contacts are provided by histidine 93 and lysine 96. Position 134 is a nitrated tyrosine (tyrosine 134).

Belongs to the plant globin family. In terms of assembly, monomer. In terms of processing, nitrated mainly at Tyr-31 and, to a lower extent, at Tyr-26 and Tyr-134, in effective nodules and particularly in hypoxic conditions; this mechanism may play a protective role in the symbiosis by buffering toxic peroxynitrite NO(2)(-). Nitration level decrease during nodule senescence. Phosphorylation at Ser-46 disrupts the molecular environment of its porphyrin ring oxygen binding pocket, thus leading to a reduced oxygen consumption and to the delivery of oxygen O(2) to symbiosomes. As to expression, root nodules.

Its subcellular location is the cytoplasm. It localises to the cytosol. The protein localises to the nucleus. Functionally, leghemoglobin that reversibly binds oxygen O(2) through a pentacoordinated heme iron. In root nodules, facilitates the diffusion of oxygen to the bacteroids while preventing the bacterial nitrogenase from being inactivated by buffering dioxygen, nitric oxide and carbon monoxide, and promoting the formation of reactive oxygen species (ROS, e.g. H(2)O(2)). This role is essential for symbiotic nitrogen fixation (SNF). This Phaseolus vulgaris (Kidney bean) protein is Leghemoglobin alpha.